The following is a 206-amino-acid chain: Nucleoside triphosphate pyrophosphatase (206 aa).

The Proton acceptor role is filled by Asp-76.

It belongs to the Maf family. Requires a divalent metal cation as cofactor.

The protein resides in the cytoplasm. The enzyme catalyses a ribonucleoside 5'-triphosphate + H2O = a ribonucleoside 5'-phosphate + diphosphate + H(+). It carries out the reaction a 2'-deoxyribonucleoside 5'-triphosphate + H2O = a 2'-deoxyribonucleoside 5'-phosphate + diphosphate + H(+). Its function is as follows. Nucleoside triphosphate pyrophosphatase. May have a dual role in cell division arrest and in preventing the incorporation of modified nucleotides into cellular nucleic acids. In Streptomyces coelicolor (strain ATCC BAA-471 / A3(2) / M145), this protein is Nucleoside triphosphate pyrophosphatase.